The chain runs to 662 residues: High affinity sulfate transporter 2 (662 aa).

The interval Met-1–Leu-35 is disordered. The next 12 membrane-spanning stretches (helical) occupy residues Gly-103–Ala-123, Leu-128–Gly-148, Ile-153–Ile-173, Leu-182–Cys-202, Gly-205–Ile-225, Trp-264–Ala-284, Phe-291–Ile-311, Ala-346–Gly-366, Met-383–Gly-403, Val-420–Phe-440, Val-447–Leu-467, and Gly-481–Ile-501. The region spanning Gln-532 to Tyr-655 is the STAS domain.

Belongs to the SLC26A/SulP transporter (TC 2.A.53) family.

Its subcellular location is the membrane. Its function is as follows. High-affinity H(+)/sulfate cotransporter that mediates the uptake of sulfate by plant roots from low concentrations of sulfate in the soil solution. The protein is High affinity sulfate transporter 2 (ST2) of Stylosanthes hamata (Caribbean stylo).